The following is a 70-amino-acid chain: Large ribosomal subunit protein uL30 (70 aa).

Belongs to the universal ribosomal protein uL30 family. In terms of assembly, part of the 50S ribosomal subunit.

In Renibacterium salmoninarum (strain ATCC 33209 / DSM 20767 / JCM 11484 / NBRC 15589 / NCIMB 2235), this protein is Large ribosomal subunit protein uL30.